We begin with the raw amino-acid sequence, 766 residues long: Probable beta-glucosidase K (766 aa).

Residue N19 is glycosylated (N-linked (GlcNAc...) asparagine). Residue D196 is part of the active site. Residues N288, N453, and N748 are each glycosylated (N-linked (GlcNAc...) asparagine). The 160-residue stretch at 369-528 folds into the PA14 domain; the sequence is EGQPGLGMRF…DPERAIARAV (160 aa). The tract at residues 726–766 is disordered; that stretch reads LGRRGRSGSSPAVYRGRSNNVVNRTSHQGAQRISKGGFAAR. The span at 742 to 756 shows a compositional bias: polar residues; it reads RSNNVVNRTSHQGAQ.

It belongs to the glycosyl hydrolase 3 family.

The protein resides in the secreted. It catalyses the reaction Hydrolysis of terminal, non-reducing beta-D-glucosyl residues with release of beta-D-glucose.. It functions in the pathway glycan metabolism; cellulose degradation. Its function is as follows. Beta-glucosidases are one of a number of cellulolytic enzymes involved in the degradation of cellulosic biomass. Catalyzes the last step releasing glucose from the inhibitory cellobiose. The polypeptide is Probable beta-glucosidase K (bglK) (Aspergillus fumigatus (strain CBS 144.89 / FGSC A1163 / CEA10) (Neosartorya fumigata)).